The chain runs to 314 residues: Citrate/oxoglutarate carrier protein (314 aa).

Solcar repeat units follow at residues 18–100 (VSFS…EAEY), 107–199 (LNNF…VEDG), and 217–301 (EKIG…AKEF). 5 helical membrane passes run 23-44 (ILLG…LEVV), 77-97 (IPWA…VSAE), 111-127 (ASGI…QAYL), 178-198 (VAIR…LVED), and 218-238 (KIGA…IEVI). Residues 246 to 259 (KEDPNRPKNLTVGK) mediate DNA binding. A helical membrane pass occupies residues 273-294 (LYRGVTPRIGLGIWQTVFMVGF).

The protein belongs to the mitochondrial carrier (TC 2.A.29) family.

The protein localises to the mitochondrion inner membrane. It localises to the mitochondrion matrix. Its subcellular location is the mitochondrion nucleoid. With respect to regulation, strongly inhibited by mersalyl, p-chloromercuribenzenesulfonate, mercuric chloride, N-ethylmaleimide, pyridoxal 5'-phosphate, bathophenanthroline, and tannic acid. Partially inhibited by alpha-cyanocinnamate and bromescol purple. Weakly inhibited by butylmalonate and phenylsuccinate. Not inhibited by 1,2,3-benzenetricarboxylate or carboxyatractyloside. Its function is as follows. Mitochondrial antiporter which catalyzes the transport of citrate and oxoglutarate across the membrane. Also shows specificity for oxaloacetate, and to a lesser extent succinate and fumarate. Transports isocitrate, cis-aconitate and L-malate with very low efficiency. Does not show uniporter activity. Helps to maintain normal citrate levels and NADPH/NADP(+) ratios under conditions of oxidative stress. In addition, associates with the mitochondrial nucleoid and binds DNA in vitro, although the relevance of these data in vivo is unclear. This is Citrate/oxoglutarate carrier protein (YHM2) from Saccharomyces cerevisiae (strain ATCC 204508 / S288c) (Baker's yeast).